We begin with the raw amino-acid sequence, 518 residues long: Putative beta-xylosidase (518 aa).

The active-site Proton acceptor is the Asp47. The active-site Proton donor is Glu203.

The protein belongs to the glycosyl hydrolase 43 family.

It catalyses the reaction Hydrolysis of (1-&gt;4)-beta-D-xylans, to remove successive D-xylose residues from the non-reducing termini.. The polypeptide is Putative beta-xylosidase (Xylanibacter ruminicola (Prevotella ruminicola)).